We begin with the raw amino-acid sequence, 307 residues long: Ribosomal RNA small subunit methyltransferase H (307 aa).

S-adenosyl-L-methionine-binding positions include 32–34 (GGH), Asp52, Phe78, Asp100, and Gln107.

It belongs to the methyltransferase superfamily. RsmH family.

The protein resides in the cytoplasm. It catalyses the reaction cytidine(1402) in 16S rRNA + S-adenosyl-L-methionine = N(4)-methylcytidine(1402) in 16S rRNA + S-adenosyl-L-homocysteine + H(+). Specifically methylates the N4 position of cytidine in position 1402 (C1402) of 16S rRNA. In Coxiella burnetii (strain CbuK_Q154) (Coxiella burnetii (strain Q154)), this protein is Ribosomal RNA small subunit methyltransferase H.